Here is a 67-residue protein sequence, read N- to C-terminus: Moricin (67 aa).

The first 23 residues, 1-23, serve as a signal peptide directing secretion; sequence MKLTSLFIFVIVALSLLFSSTDA.

It belongs to the moricin family. In terms of assembly, monomer.

It localises to the secreted. Functionally, antimicrobial peptide. Active against a broad spectrum of Gram-positive and Gram-negative bacteria including methicillin-resistant S.aureus ATCC 43 300, S.aureus BAA-39, pathogenic strains of L.monocytogenes, K.pneumoniae, E.coli O157:H7, S.typhimurium and multidrug-resistant S.typhimurium DT104 with minimum inhibitory concentration (MIC) of 1.4 uM for all except for S.aureus BAA-39. Also active against Serratia marcescens. Probably acts by disturbing membrane functions with its amphipathic alpha-helical structure. May protect a developing embryo from bacterial infection. In Manduca sexta (Tobacco hawkmoth), this protein is Moricin.